The primary structure comprises 879 residues: Metabotropic glutamate receptor 3 (879 aa).

An N-terminal signal peptide occupies residues 1–22 (MKMLTRLQVLTLALFSKGFLLS). Topologically, residues 23–576 (LGDHNFLRRE…EDYIRWEDAW (554 aa)) are extracellular. An intrachain disulfide couples Cys-57 to Cys-99. Residues Ser-151 and 172–174 (AST) contribute to the L-glutamate site. Asn-209 carries N-linked (GlcNAc...) asparagine glycosylation. Tyr-222 provides a ligand contact to L-glutamate. Disulfide bonds link Cys-240/Cys-527, Cys-361/Cys-373, Cys-412/Cys-419, Cys-509/Cys-528, Cys-513/Cys-531, Cys-534/Cys-546, and Cys-549/Cys-562. The N-linked (GlcNAc...) asparagine glycan is linked to Asn-292. Asp-301 is an L-glutamate binding site. Lys-389 contributes to the L-glutamate binding site. Residues Asn-414 and Asn-439 are each glycosylated (N-linked (GlcNAc...) asparagine). The helical transmembrane segment at 577–599 (AIGPVTIACLGFMCTCMVVTVFI) threads the bilayer. Topologically, residues 600-613 (KHNNTPLVKASGRE) are cytoplasmic. Residues 614–634 (LCYILLFGVGLSYCMTFFFIA) form a helical membrane-spanning segment. The Extracellular segment spans residues 635–645 (KPSPVICALRR). A helical membrane pass occupies residues 646–664 (LGLGSSFAICYSALLTKTN). Over 665–688 (CIARIFDGVKNGAQRPKFISPSSQ) the chain is Cytoplasmic. The helical transmembrane segment at 689–709 (VFICLGLILVQIVMVSVWLIL) threads the bilayer. Residues 710–734 (EAPGTRRYTLAEKRETVILKCNVKD) lie on the Extracellular side of the membrane. A helical transmembrane segment spans residues 735–756 (SSMLISLTYDVILVILCTVYAF). Residues 757–769 (KTRKCPENFNEAK) are Cytoplasmic-facing. A helical transmembrane segment spans residues 770–792 (FIGFTMYTTCIIWLAFLPIFYVT). Over 793 to 802 (SSDYRVQTTT) the chain is Extracellular. The chain crosses the membrane as a helical span at residues 803–828 (MCISVSLSGFVVLGCLFAPKVHIILF). Residues 829-879 (QPQKNVVTHRLHLNRFSVSGTGTTYSQSSASTYVPTVCNGREVLDSTTSSL) are Cytoplasmic-facing.

The protein belongs to the G-protein coupled receptor 3 family. Interacts with TAMALIN. As to expression, detected in brain cortex, thalamus, subthalamic nucleus, substantia nigra, hypothalamus, hippocampus, corpus callosum, caudate nucleus and amygdala.

It localises to the cell membrane. In terms of biological role, G-protein coupled receptor for glutamate. Ligand binding causes a conformation change that triggers signaling via guanine nucleotide-binding proteins (G proteins) and modulates the activity of down-stream effectors. Signaling inhibits adenylate cyclase activity. The sequence is that of Metabotropic glutamate receptor 3 (GRM3) from Homo sapiens (Human).